The chain runs to 814 residues: MELKILSVAIATTLTSTGVFALSEPVSQVTEQHAHSAHTHGVEFNRVEYQPTATLPIQPSKATRVQSLESLDESSTACDLEALVTESSNQLISEILSQGATCVNQLFSAESRIQESVFSSDHMYNIAKHTTTLAKGYTGGGSDELETLFLYLRAGYYAEFYNDNISFIEWVTPAVKESVDAFVNTASFYENSDRHGKVLSEVIITMDSAGLQHAYLPQVTQWLTRWNDQYAQHWYMRNAVNGVFTILFGGQWNEQFVQIIGNQTDLAKALGDFALRASSIGAEDEFMAANAGRELGRLTKYTGNASSVVKSQLSRIFEQYEMYGRGDAVWLAAADTASYYADCSEFGICNFETELKGLVLSQTYTCSPTIRILSQNMTQEQHAAACSKMGYEEGYFHQSLETGEQPVKDDHNTQLQVNIFDSSTDYGKYAGPIFDISTDNGGMYLEGDPSQPGNIPNFIAYEASYANADHFVWNLEHEYVHYLDGRFDLYGGFSHPTEKIVWWSEGIAEYVAQENDNQAALETILDGSTYTLSEIFETTYDGFDVDRIYRWGYLAVRFMFENHKDDVNQMLVETRQGNWINYKATITQWANLYQSEFEQWQQTLVSNGAPNAVITANSKGKVGESITFSSENSTDPNGKIVSVLWDFGDGSTSTQTKPTHQYGSEGEYSVSLSVTDSEGLTATATHTVVISALGGNDTLPQDCAVQSKVSGGRLTAGEPVCLANQQTIWLSVPAVNESSNLAITTGNGTGNLKLEYSNSGWPDDTNLHGWSDNIGNGECITLSNQSNYWGYVKVSGDFENAAIVVDFDAQKCRQ.

The first 21 residues, 1 to 21, serve as a signal peptide directing secretion; that stretch reads MELKILSVAIATTLTSTGVFA. Residues 22-75 constitute a propeptide that is removed on maturation; sequence LSEPVSQVTEQHAHSAHTHGVEFNRVEYQPTATLPIQPSKATRVQSLESLDESS. H477 is a binding site for Zn(2+). Residue E478 is part of the active site. Residue H481 coordinates Zn(2+). Positions 609–697 constitute a PKD domain; the sequence is APNAVITANS…VVISALGGND (89 aa).

Belongs to the peptidase M9A family. Requires Zn(2+) as cofactor. In terms of processing, proteolytic cleavage might yield three different active forms.

Its subcellular location is the secreted. It carries out the reaction Digestion of native collagen in the triple helical region at Xaa-|-Gly bonds. With synthetic peptides, a preference is shown for Gly at P3 and P1', Pro and Ala at P2 and P2', and hydroxyproline, Ala or Arg at P3'.. This Vibrio alginolyticus protein is Microbial collagenase.